The sequence spans 224 residues: DSGSAIVALTNDRDTSYFGEIGIGTPPQKYTVIYDTGSSVLWVPSSKEQDFIEATDETDNVFLHRRFSFWLNRNVDEEEGGELVFGGLDPNHFRGDHTYVPVTYQYYWQFGIGDVLIGDKSTGFCAPGCQAFADSGTSLLSGPTAIVTQINHAIGANSEELNVKFGLTPEQYILKGEATQCISGFTAMDATLLGPLWILGDVFMRPYHTVFDYGNLLVGFAEAA.

The Peptidase A1 domain occupies 1 to 221 (DSGSAIVALT…DYGNLLVGFA (221 aa)). Residue D35 is part of the active site. A disulfide bridge connects residues C125 and C129. D134 is an active-site residue.

This sequence belongs to the peptidase A1 family. As to quaternary structure, heterodimer of a light chain and a heavy chain. An intermediate form is produced first, and undergoes proteolytic processing to remove the internal plant-specific insert (PSI) and the propeptide. In terms of processing, N-glycosylated. Pistils.

It localises to the microsome membrane. The protein localises to the protein storage vacuole. The protein resides in the secreted. Its subcellular location is the cell wall. It is found in the extracellular space. It localises to the extracellular matrix. Its activity is regulated as follows. Inhibited by pepstatin. In terms of biological role, aspartic protease with a high preference for bonds between hydrophobic residues. This is Cardosin-E from Cynara cardunculus (Cardoon).